A 513-amino-acid chain; its full sequence is ATP synthase subunit alpha (513 aa).

169-176 (GDRQTGKT) contacts ATP.

Belongs to the ATPase alpha/beta chains family. In terms of assembly, F-type ATPases have 2 components, CF(1) - the catalytic core - and CF(0) - the membrane proton channel. CF(1) has five subunits: alpha(3), beta(3), gamma(1), delta(1), epsilon(1). CF(0) has three main subunits: a(1), b(2) and c(9-12). The alpha and beta chains form an alternating ring which encloses part of the gamma chain. CF(1) is attached to CF(0) by a central stalk formed by the gamma and epsilon chains, while a peripheral stalk is formed by the delta and b chains.

It localises to the cell inner membrane. The enzyme catalyses ATP + H2O + 4 H(+)(in) = ADP + phosphate + 5 H(+)(out). Functionally, produces ATP from ADP in the presence of a proton gradient across the membrane. The alpha chain is a regulatory subunit. In Vesicomyosocius okutanii subsp. Calyptogena okutanii (strain HA), this protein is ATP synthase subunit alpha.